The chain runs to 1097 residues: Protein STICHEL-like 3 (1097 aa).

Disordered stretches follow at residues M1–I22, S74–G168, N220–E293, G321–S358, and D400–K436. The segment covering R10 to N20 has biased composition (polar residues). A compositionally biased stretch (basic and acidic residues) spans L95 to K113. Over residues P126–T136 the composition is skewed to polar residues. A compositionally biased stretch (basic and acidic residues) spans P137–G168. The segment covering Y227–G241 has biased composition (gly residues). A compositionally biased stretch (basic residues) spans R245–G259. Composition is skewed to basic and acidic residues over residues V281–F291 and K332–S345. Low complexity predominate over residues D346–S358. A compositionally biased stretch (basic residues) spans E411–Q429. ATP is bound at residue G472 to T479. C491, C500, C503, and C506 together coordinate Zn(2+). Positions K742–T770 form a coiled coil. Disordered stretches follow at residues S790–K828, D913–L932, and V956–I1003. Basic and acidic residues-rich tracts occupy residues G796–P807 and G818–K828. A compositionally biased stretch (polar residues) spans A993–I1003.

Belongs to the DnaX/STICHEL family.

The protein is Protein STICHEL-like 3 of Arabidopsis thaliana (Mouse-ear cress).